We begin with the raw amino-acid sequence, 325 residues long: Foldase protein PrsA (325 aa).

The signal sequence occupies residues M1–A20. C21 carries the N-palmitoyl cysteine lipid modification. C21 carries the S-diacylglycerol cysteine lipid modification. Positions E139 to K245 constitute a PpiC domain. 2 disordered regions span residues E159–K200 and P303–S325.

Belongs to the PrsA family.

The protein localises to the cell membrane. The enzyme catalyses [protein]-peptidylproline (omega=180) = [protein]-peptidylproline (omega=0). Plays a major role in protein secretion by helping the post-translocational extracellular folding of several secreted proteins. The polypeptide is Foldase protein PrsA (Staphylococcus epidermidis (strain ATCC 35984 / DSM 28319 / BCRC 17069 / CCUG 31568 / BM 3577 / RP62A)).